The primary structure comprises 293 residues: Deubiquitinase OTUD6B (293 aa).

Met1 is subject to N-acetylmethionine. The OTU domain occupies 147–284 (LEIKQIPSDG…GEHYNSVTRL (138 aa)). The segment at 152–158 (IPSDGHC) is cys-loop. Asp155 is an active-site residue. The Nucleophile role is filled by Cys158. Residues 219 to 229 (IVNTAAWGGQL) are variable-loop. A his-loop region spans residues 267–277 (YMRHAYGLGEH). Residue His277 is part of the active site.

Interacts with the eukaryotic translation initiation factor 4F complex.

It catalyses the reaction Thiol-dependent hydrolysis of ester, thioester, amide, peptide and isopeptide bonds formed by the C-terminal Gly of ubiquitin (a 76-residue protein attached to proteins as an intracellular targeting signal).. In terms of biological role, deubiquitinating enzyme that may play a role in the ubiquitin-dependent regulation of protein synthesis, downstream of mTORC1. May associate with the protein synthesis initiation complex and modify its ubiquitination to repress translation. May also repress DNA synthesis and modify different cellular targets thereby regulating cell growth and proliferation. May also play a role in proteasome assembly and function. Its function is as follows. Stimulates protein synthesis. Influences the expression of CCND1/cyclin D1 by promoting its translation and regulates MYC/c-Myc protein stability. This chain is Deubiquitinase OTUD6B, found in Homo sapiens (Human).